The primary structure comprises 1117 residues: Centrosomal protein of 126 kDa (1117 aa).

A disordered region spans residues 1 to 42; it reads MLAGRPGTRSAVGELGTESSDNLDRAPLGPRESGGHHRPGSY. Residues 49–121 are a coiled coil; sequence LEKNLEEERQ…EEVTEKFQRA (73 aa). 2 disordered regions span residues 643–664 and 730–759; these read AENSHSLKNKTGTTQQHSQQFH and KKEESKIPVHDDSKTKQGKPQRGRAKIIRK. A compositionally biased stretch (basic and acidic residues) spans 730-744; that stretch reads KKEESKIPVHDDSKT. Residues 745–758 are compositionally biased toward basic residues; it reads KQGKPQRGRAKIIR.

In terms of assembly, interacts with DCTN1. In terms of tissue distribution, expressed in brain, lung, skeletal muscle, kidney, pancreas, testis and ovary.

The protein resides in the midbody. The protein localises to the cytoplasm. It localises to the cytoskeleton. It is found in the microtubule organizing center. Its subcellular location is the centrosome. The protein resides in the cilium basal body. Participates in cytokinesis. Necessary for microtubules and mitotic spindle organization. Involved in primary cilium formation. The polypeptide is Centrosomal protein of 126 kDa (Homo sapiens (Human)).